Consider the following 448-residue polypeptide: Signal recognition particle protein (448 aa).

Residues 101–108 (GLQGSGKT), 182–186 (DSAGR), and 240–243 (SKFD) each bind GTP.

The protein belongs to the GTP-binding SRP family. SRP54 subfamily. As to quaternary structure, part of the signal recognition particle protein translocation system, which is composed of SRP and FtsY. SRP is a ribonucleoprotein composed of Ffh and a 4.5S RNA molecule.

It is found in the cytoplasm. It catalyses the reaction GTP + H2O = GDP + phosphate + H(+). Its function is as follows. Involved in targeting and insertion of nascent membrane proteins into the cytoplasmic membrane. Binds to the hydrophobic signal sequence of the ribosome-nascent chain (RNC) as it emerges from the ribosomes. The SRP-RNC complex is then targeted to the cytoplasmic membrane where it interacts with the SRP receptor FtsY. Interaction with FtsY leads to the transfer of the RNC complex to the Sec translocase for insertion into the membrane, the hydrolysis of GTP by both Ffh and FtsY, and the dissociation of the SRP-FtsY complex into the individual components. In Helicobacter pylori (strain ATCC 700392 / 26695) (Campylobacter pylori), this protein is Signal recognition particle protein.